Consider the following 618-residue polypeptide: Baculoviral IAP repeat-containing protein 2 (618 aa).

3 BIR repeats span residues Glu46–Ile113, Glu184–Leu250, and His269–Leu336. The Zn(2+) site is built by Cys306, Cys309, His326, and Cys333. The CARD domain occupies Met453 to Lys543. Residues Cys571–Arg606 form an RING-type zinc finger.

This sequence belongs to the IAP family. As to quaternary structure, interacts with DIABLO/SMAC and with PRSS25; these interactions inhibit apoptotic suppressor activity. Interacts with CASP9. Interacts (via BIR domains) with TRAF2; the interaction is required for IKBKE ubiquitination. Interacts with E2F1, RIPK1, RIPK2, RIPK3, RIPK4, BIRC5/survivin and USP19. HSP90AB1. Interacts with UBXN1. Interacts with GSK3B. Interacts with several death receptors, inclusing FAS, TNFRSF10A and TNFRSF10B. Recruited to TNFRSF10B in the absence of receptor stimulation. When TNFRSF10B is stimulated, further recruited to the receptor and cleaved by caspases. Proteolytic fragments remain associated with TNFRSF10B. Auto-ubiquitinated and degraded by the proteasome in apoptotic cells. Post-translationally, upon stimulation of death receptors, including TNFRSF10B, recruited to receptors and cleaved by caspases. Proteolytic fragments remain associated with the receptors. This cleavage presumably inactivates the protein. As to expression, present in many fetal and adult tissues. Mainly expressed in adult skeletal muscle, thymus, testis, ovary, and pancreas, low or absent in brain and peripheral blood leukocytes.

It is found in the cytoplasm. Its subcellular location is the nucleus. It catalyses the reaction S-ubiquitinyl-[E2 ubiquitin-conjugating enzyme]-L-cysteine + [acceptor protein]-L-lysine = [E2 ubiquitin-conjugating enzyme]-L-cysteine + N(6)-ubiquitinyl-[acceptor protein]-L-lysine.. Its activity is regulated as follows. The CARD domain inhibits the activation of E3 ubiquitin ligase activity by preventing RING domain dimerization and E2 ubiquitin donor binding and activation. The CARD domain-mediated autoinhibition of the E3 ubiquitin-protein ligase activity suppresses cell proliferation and migration. USP19 regulates the stability of BIRC2/c-IAP1 by preventing its ubiquitination. Functionally, multi-functional protein which regulates not only caspases and apoptosis, but also modulates inflammatory signaling and immunity, mitogenic kinase signaling, and cell proliferation, as well as cell invasion and metastasis. Acts as an E3 ubiquitin-protein ligase regulating NF-kappa-B signaling and regulates both canonical and non-canonical NF-kappa-B signaling by acting in opposite directions: acts as a positive regulator of the canonical pathway and suppresses constitutive activation of non-canonical NF-kappa-B signaling. The target proteins for its E3 ubiquitin-protein ligase activity include: RIPK1, RIPK2, RIPK3, RIPK4, CASP3, CASP7, CASP8, TRAF2, DIABLO/SMAC, MAP3K14/NIK, MAP3K5/ASK1, IKBKG/NEMO, IKBKE and MXD1/MAD1. Can also function as an E3 ubiquitin-protein ligase of the NEDD8 conjugation pathway, targeting effector caspases for neddylation and inactivation. Acts as an important regulator of innate immune signaling via regulation of Toll-like receptors (TLRs), Nodlike receptors (NLRs) and RIG-I like receptors (RLRs), collectively referred to as pattern recognition receptors (PRRs). Protects cells from spontaneous formation of the ripoptosome, a large multi-protein complex that has the capability to kill cancer cells in a caspase-dependent and caspase-independent manner. Suppresses ripoptosome formation by ubiquitinating RIPK1 and CASP8. Can stimulate the transcriptional activity of E2F1. Plays a role in the modulation of the cell cycle. In Homo sapiens (Human), this protein is Baculoviral IAP repeat-containing protein 2 (BIRC2).